We begin with the raw amino-acid sequence, 256 residues long: Thiazole synthase (256 aa).

Lys-91 functions as the Schiff-base intermediate with DXP in the catalytic mechanism. Residues Gly-152, 179 to 180 (AG), and 201 to 202 (NT) contribute to the 1-deoxy-D-xylulose 5-phosphate site.

This sequence belongs to the ThiG family. Homotetramer. Forms heterodimers with either ThiH or ThiS.

The protein localises to the cytoplasm. It catalyses the reaction [ThiS sulfur-carrier protein]-C-terminal-Gly-aminoethanethioate + 2-iminoacetate + 1-deoxy-D-xylulose 5-phosphate = [ThiS sulfur-carrier protein]-C-terminal Gly-Gly + 2-[(2R,5Z)-2-carboxy-4-methylthiazol-5(2H)-ylidene]ethyl phosphate + 2 H2O + H(+). Its pathway is cofactor biosynthesis; thiamine diphosphate biosynthesis. Its function is as follows. Catalyzes the rearrangement of 1-deoxy-D-xylulose 5-phosphate (DXP) to produce the thiazole phosphate moiety of thiamine. Sulfur is provided by the thiocarboxylate moiety of the carrier protein ThiS. In vitro, sulfur can be provided by H(2)S. This chain is Thiazole synthase, found in Erwinia tasmaniensis (strain DSM 17950 / CFBP 7177 / CIP 109463 / NCPPB 4357 / Et1/99).